The following is a 25-amino-acid chain: Dermaseptin-5.2TR (25 aa).

Residue valine 25 is modified to Valine amide.

Expressed by the skin glands.

It is found in the secreted. Has antimicrobial activity. The polypeptide is Dermaseptin-5.2TR (Phyllomedusa trinitatis (Trinidad leaf frog)).